The chain runs to 449 residues: Chromosomal replication initiator protein DnaA (449 aa).

A domain I, interacts with DnaA modulators region spans residues Met-1–Val-69. Positions Val-69–Ala-112 are domain II. The domain III, AAA+ region stretch occupies residues Asn-113 to Ala-329. The ATP site is built by Gly-157, Gly-159, Lys-160, and Thr-161. The segment at Ser-330–Thr-449 is domain IV, binds dsDNA.

Belongs to the DnaA family. In terms of assembly, oligomerizes as a right-handed, spiral filament on DNA at oriC.

It localises to the cytoplasm. Functionally, plays an essential role in the initiation and regulation of chromosomal replication. ATP-DnaA binds to the origin of replication (oriC) to initiate formation of the DNA replication initiation complex once per cell cycle. Binds the DnaA box (a 9 base pair repeat at the origin) and separates the double-stranded (ds)DNA. Forms a right-handed helical filament on oriC DNA; dsDNA binds to the exterior of the filament while single-stranded (ss)DNA is stabiized in the filament's interior. The ATP-DnaA-oriC complex binds and stabilizes one strand of the AT-rich DNA unwinding element (DUE), permitting loading of DNA polymerase. After initiation quickly degrades to an ADP-DnaA complex that is not apt for DNA replication. Binds acidic phospholipids. This Geotalea uraniireducens (strain Rf4) (Geobacter uraniireducens) protein is Chromosomal replication initiator protein DnaA.